Consider the following 352-residue polypeptide: N-acetyl-gamma-glutamyl-phosphate reductase (352 aa).

Cys-158 is an active-site residue.

The protein belongs to the NAGSA dehydrogenase family. Type 1 subfamily.

It localises to the cytoplasm. It carries out the reaction N-acetyl-L-glutamate 5-semialdehyde + phosphate + NADP(+) = N-acetyl-L-glutamyl 5-phosphate + NADPH + H(+). It functions in the pathway amino-acid biosynthesis; L-arginine biosynthesis; N(2)-acetyl-L-ornithine from L-glutamate: step 3/4. Catalyzes the NADPH-dependent reduction of N-acetyl-5-glutamyl phosphate to yield N-acetyl-L-glutamate 5-semialdehyde. The chain is N-acetyl-gamma-glutamyl-phosphate reductase from Mycobacterium bovis (strain BCG / Tokyo 172 / ATCC 35737 / TMC 1019).